We begin with the raw amino-acid sequence, 376 residues long: Actin-related protein T1 (376 aa).

This sequence belongs to the actin family.

The protein resides in the cytoplasm. It localises to the cytoskeleton. Its subcellular location is the nucleus. The protein localises to the cytoplasmic vesicle. It is found in the secretory vesicle. The protein resides in the acrosome. Negatively regulates the Hedgehog (SHH) signaling. Binds to the promoter of the SHH signaling mediator, GLI1, and inhibits its expression. The sequence is that of Actin-related protein T1 (Actrt1) from Mus musculus (Mouse).